The chain runs to 326 residues: Adenosine receptor A1 (326 aa).

The Extracellular segment spans residues Met1–Ala10. A helical transmembrane segment spans residues Ala11 to Ala33. Residues Val34 to Cys46 are Cytoplasmic-facing. A helical transmembrane segment spans residues Phe47–Ile69. Over Asn70–Cys80 the chain is Extracellular. Cys80 and Cys169 form a disulfide bridge. A helical membrane pass occupies residues Leu81–Ala102. Over Val103–Arg123 the chain is Cytoplasmic. Residues Ala124–Trp146 form a helical membrane-spanning segment. Over Asn147–Ser176 the chain is Extracellular. Residue Asn159 is glycosylated (N-linked (GlcNAc...) asparagine). The chain crosses the membrane as a helical span at residues Met177–Leu201. The Cytoplasmic segment spans residues Glu202 to Ser235. Residues Leu236–Phe259 form a helical membrane-spanning segment. At Cys260–Thr267 the chain is on the extracellular side. The chain crosses the membrane as a helical span at residues Ile268 to Ile292. The Cytoplasmic portion of the chain corresponds to Gln293–Asp326. A lipid anchor (S-palmitoyl cysteine) is attached at Cys309.

The protein belongs to the G-protein coupled receptor 1 family.

The protein localises to the cell membrane. In terms of biological role, receptor for adenosine. The activity of this receptor is mediated by G proteins which inhibit adenylyl cyclase. The chain is Adenosine receptor A1 (ADORA1) from Cavia porcellus (Guinea pig).